Consider the following 346-residue polypeptide: Short-chain dehydrogenase/reductase bet4 (346 aa).

Residues 1 to 35 (MTPAKAPSHAKKPEAGSQPISSMWTQMFPPKPTYT) form a disordered region. The NADP(+) site is built by V56, K80, D105, and N132. The Proton donor role is filled by S191. NADP(+) is bound by residues Y222 and K226. The active-site Proton acceptor is Y222. The active-site Lowers pKa of active site Tyr is the K226.

Belongs to the short-chain dehydrogenases/reductases (SDR) family.

The enzyme catalyses dehydroprobetaenone I + AH2 = probetaenone I + A. It participates in mycotoxin biosynthesis. In terms of biological role, short-chain dehydrogenase/reductase; part of the gene cluster that mediates the biosynthesis of betaenones, phytotoxic polyketides involved in leaf spot disease in sugar beets. The first step of the pathway is the synthesis of dehydroprobetaenone I by the polyketide synthase bet1 and the enoyl reductase bet3 via condensation of one acetyl-CoA starter unit with 7 malonyl-CoA units and 5 methylations. The C-terminal reductase (R) domain of bet1 catalyzes the reductive release of the polyketide chain. Because bet1 lacks a designated enoylreductase (ER) domain, the required activity is provided the enoyl reductase bet3. The short-chain dehydrogenase/reductase bet4 then catalyzes reduction of dehydroprobetaenone I to probetaenone I. The cytochrome P450 monooxygenase bet2 catalyzes successive epoxidation, oxidation (resulting from epoxide opening) and hydroxylation to install a tertiary alcohol in the decaline ring to yield betaenone C from dehydroprobetaenone I and betaenone B from probetaenone I. The FAD-linked oxidoreductase (orf1) is probably responsible for the conversion of betaenone C to betaenone A via an intramolecular aldol reaction between C-1 and C-17 to form the bridged tricyclic system in betaenone A. In Neocamarosporium betae (Beet black rot fungus), this protein is Short-chain dehydrogenase/reductase bet4.